Here is a 213-residue protein sequence, read N- to C-terminus: MWLMAKGILGRKLGMSRFFTAEGVAVPVTLIEAGPCTVVQKKTPDTDGYSAVQLGFMEQPAKRVNRPLKGHFGRAGVKPSRFLRELRVADAADYEVGQVLKADLFDVGEIVDVVGTSKGKGFAGGIKRHGFHRGPMGHGSKYHRRPGALAAKGPARVFKGRKLPGRLGGVRVTVQNLEIVKVDPERNLLAVRGAVPGIRGSLVVVKSAVKGNE.

The protein belongs to the universal ribosomal protein uL3 family. In terms of assembly, part of the 50S ribosomal subunit. Forms a cluster with proteins L14 and L19.

One of the primary rRNA binding proteins, it binds directly near the 3'-end of the 23S rRNA, where it nucleates assembly of the 50S subunit. The chain is Large ribosomal subunit protein uL3 from Desulforudis audaxviator (strain MP104C).